The primary structure comprises 348 residues: Probable dual-specificity RNA methyltransferase RlmN (348 aa).

Residue E93 is the Proton acceptor of the active site. Residues 99–333 enclose the Radical SAM core domain; the sequence is TEKRLTACLS…VSFRKSRGLD (235 aa). C106 and C338 are oxidised to a cystine. [4Fe-4S] cluster is bound by residues C113, C117, and C120. Residues 160–161, S190, 219–221, and N295 contribute to the S-adenosyl-L-methionine site; these read GE and SLH. C338 acts as the S-methylcysteine intermediate in catalysis.

The protein belongs to the radical SAM superfamily. RlmN family. [4Fe-4S] cluster is required as a cofactor.

It is found in the cytoplasm. It carries out the reaction adenosine(2503) in 23S rRNA + 2 reduced [2Fe-2S]-[ferredoxin] + 2 S-adenosyl-L-methionine = 2-methyladenosine(2503) in 23S rRNA + 5'-deoxyadenosine + L-methionine + 2 oxidized [2Fe-2S]-[ferredoxin] + S-adenosyl-L-homocysteine. The enzyme catalyses adenosine(37) in tRNA + 2 reduced [2Fe-2S]-[ferredoxin] + 2 S-adenosyl-L-methionine = 2-methyladenosine(37) in tRNA + 5'-deoxyadenosine + L-methionine + 2 oxidized [2Fe-2S]-[ferredoxin] + S-adenosyl-L-homocysteine. Its function is as follows. Specifically methylates position 2 of adenine 2503 in 23S rRNA and position 2 of adenine 37 in tRNAs. This is Probable dual-specificity RNA methyltransferase RlmN from Prochlorococcus marinus (strain MIT 9312).